Reading from the N-terminus, the 402-residue chain is Multidrug resistance protein MdtH (402 aa).

Residues 1-12 (MSRVSQARNLGK) lie on the Cytoplasmic side of the membrane. A helical membrane pass occupies residues 13 to 33 (YFLLIDNMLVVLGFFVVFPLI). The Periplasmic portion of the chain corresponds to 34-98 (SIRFVDQMGW…GFATMGIAHE (65 aa)). Residues 99-116 (PWLLWFSCLLSGLGGTLF) form a helical membrane-spanning segment. The Cytoplasmic segment spans residues 117-138 (DPPRSALVVKLIRPQQRCRFFS). The helical transmembrane segment at 139–159 (LLMMQDSAGAVIGALLGSWLL) threads the bilayer. Residues 160–164 (QYDFR) lie on the Periplasmic side of the membrane. Residues 165–185 (LVCATGAVLFVLCAAFNAWLL) form a helical membrane-spanning segment. At 186–213 (PAWKLSTVRTPVREGMTRVMRDKRFVTY) the chain is on the cytoplasmic side. Residues 214–234 (VLTLAGYYMLAVQVMLMLPIM) form a helical membrane-spanning segment. Over 235-243 (VNDVAGAPS) the chain is Periplasmic. The helical transmembrane segment at 244–264 (AVKWMYAIEACLSLTLLYPIA) threads the bilayer. Topologically, residues 265–276 (RWSEKHFRLEHR) are cytoplasmic. Residues 277–297 (LMAGLLIMSLSMMPVGMVSGL) form a helical membrane-spanning segment. Residues 298-299 (QQ) lie on the Periplasmic side of the membrane. The helical transmembrane segment at 300–320 (LFTLICLFYIGSIIAEPARET) threads the bilayer. At 321–339 (LSALLADARARGSYMGFSR) the chain is on the cytoplasmic side. The helical transmembrane segment at 340–360 (LGLAIGGAIGYIGGGWLFDLG) threads the bilayer. Residues 361–367 (KSAHQPE) are Periplasmic-facing. A helical membrane pass occupies residues 368–388 (LPWMMLGIIGIFTFLALGWQF). Over 389 to 402 (SQKRATRRLLERDA) the chain is Cytoplasmic.

This sequence belongs to the major facilitator superfamily. DHA1 family. MdtH (TC 2.A.1.2.21) subfamily.

It is found in the cell inner membrane. The sequence is that of Multidrug resistance protein MdtH from Shigella sonnei (strain Ss046).